The following is a 21-amino-acid chain: Maculatin-1.1 (21 aa).

Phe-21 is subject to Phenylalanine amide.

Expressed by the skin dorsal glands.

It localises to the secreted. In terms of biological role, maculatin-1.1 shows significant antibacterial activity against Gram-positive bacteria, less against Gram-negative bacteria. Maculatin-1.1.1 is inactive. The protein is Maculatin-1.1 of Ranoidea genimaculata (Brown-spotted tree frog).